The primary structure comprises 143 residues: Putative acyl carrier protein phosphodiesterase (143 aa).

The protein belongs to the AcpH family.

It catalyses the reaction holo-[ACP] + H2O = apo-[ACP] + (R)-4'-phosphopantetheine + H(+). In terms of biological role, converts holo-ACP to apo-ACP by hydrolytic cleavage of the phosphopantetheine prosthetic group from ACP. The polypeptide is Putative acyl carrier protein phosphodiesterase (acpH) (Shigella flexneri).